The sequence spans 478 residues: Protein nucleotidyltransferase YdiU (478 aa).

ATP contacts are provided by Gly84, Gly86, Arg87, Lys107, Asp119, Gly120, Arg170, and Arg177. Asp246 (proton acceptor) is an active-site residue. Mg(2+) is bound by residues Asn247 and Asp256. Asp256 contacts ATP.

It belongs to the SELO family. The cofactor is Mg(2+). Requires Mn(2+) as cofactor.

It catalyses the reaction L-seryl-[protein] + ATP = 3-O-(5'-adenylyl)-L-seryl-[protein] + diphosphate. It carries out the reaction L-threonyl-[protein] + ATP = 3-O-(5'-adenylyl)-L-threonyl-[protein] + diphosphate. The enzyme catalyses L-tyrosyl-[protein] + ATP = O-(5'-adenylyl)-L-tyrosyl-[protein] + diphosphate. The catalysed reaction is L-histidyl-[protein] + UTP = N(tele)-(5'-uridylyl)-L-histidyl-[protein] + diphosphate. It catalyses the reaction L-seryl-[protein] + UTP = O-(5'-uridylyl)-L-seryl-[protein] + diphosphate. It carries out the reaction L-tyrosyl-[protein] + UTP = O-(5'-uridylyl)-L-tyrosyl-[protein] + diphosphate. In terms of biological role, nucleotidyltransferase involved in the post-translational modification of proteins. It can catalyze the addition of adenosine monophosphate (AMP) or uridine monophosphate (UMP) to a protein, resulting in modifications known as AMPylation and UMPylation. This Escherichia coli O157:H7 protein is Protein nucleotidyltransferase YdiU.